A 33-amino-acid chain; its full sequence is Photosystem II reaction center protein Psb30 (33 aa).

The chain crosses the membrane as a helical span at residues 7–27; it reads IQLGSLTLITLTGPLIIGIIF.

This sequence belongs to the Psb30/Ycf12 family. As to quaternary structure, PSII is composed of 1 copy each of membrane proteins PsbA, PsbB, PsbC, PsbD, PsbE, PsbF, PsbH, PsbI, PsbJ, PsbK, PsbL, PsbM, PsbT, PsbY, PsbZ, Psb30/Ycf12, peripheral proteins of the oxygen-evolving complex and a large number of cofactors. It forms dimeric complexes.

It localises to the plastid. Its subcellular location is the chloroplast thylakoid membrane. Its function is as follows. A core subunit of photosystem II (PSII), probably helps stabilize the reaction center. This is Photosystem II reaction center protein Psb30 from Euglena gracilis.